Consider the following 78-residue polypeptide: Large ribosomal subunit protein eL20 (78 aa).

The protein belongs to the eukaryotic ribosomal protein eL20 family. As to quaternary structure, part of the 50S ribosomal subunit. Binds 23S rRNA.

The sequence is that of Large ribosomal subunit protein eL20 from Pyrobaculum calidifontis (strain DSM 21063 / JCM 11548 / VA1).